Reading from the N-terminus, the 129-residue chain is Histone H2B.2 (129 aa).

Positions 1–19 (MAPKAEKKPASKAPAEKKP) are enriched in basic and acidic residues. The interval 1–38 (MAPKAEKKPASKAPAEKKPAAKKTATSGTKKRSKTRKE) is disordered. Residues K7 and K8 each carry the N6-acetyllysine; alternate modification. Residues K7 and K8 each participate in a glycyl lysine isopeptide (Lys-Gly) (interchain with G-Cter in SUMO); alternate cross-link. At S11 the chain carries Phosphoserine. At K12 the chain carries N6-acetyllysine. K17 bears the N6-acetyllysine; alternate mark. K17 is covalently cross-linked (Glycyl lysine isopeptide (Lys-Gly) (interchain with G-Cter in SUMO); alternate). Residue K18 forms a Glycyl lysine isopeptide (Lys-Gly) (interchain with G-Cter in SUMO) linkage. K123 participates in a covalent cross-link: Glycyl lysine isopeptide (Lys-Gly) (interchain with G-Cter in ubiquitin).

This sequence belongs to the histone H2B family. As to quaternary structure, the nucleosome is a histone octamer containing two molecules each of H2A, H2B, H3 and H4 assembled in one H3-H4 heterotetramer and two H2A-H2B heterodimers. The octamer wraps approximately 147 bp of DNA. Post-translationally, monoubiquitinated by the UBC2-BRE1 complex to form H2BK123ub1. H2BK123ub1 gives a specific tag for epigenetic transcriptional activation and is also prerequisite for H3K4me and H3K79me formation. H2BK123ub1 also modulates the formation of double-strand breaks during meiosis and is a prerequisite for DNA-damage checkpoint activation. Phosphorylated by STE20 to form H2BS10ph during progression through meiotic prophase. May be correlated with chromosome condensation. In terms of processing, acetylated by GCN5 to form H2BK11ac and H2BK16ac. H2BK16ac can also be formed by ESA1. Acetylation of N-terminal lysines and particularly formation of H2BK11acK16ac has a positive effect on transcription. Post-translationally, sumoylation to form H2BK6su or H2BK7su, and probably also H2BK16su or H2BK17su, occurs preferentially near the telomeres and represses gene transcription.

It localises to the nucleus. The protein localises to the chromosome. Functionally, core component of nucleosome. Nucleosomes wrap and compact DNA into chromatin, limiting DNA accessibility to the cellular machineries which require DNA as a template. Histones thereby play a central role in transcription regulation, DNA repair, DNA replication and chromosomal stability. DNA accessibility is regulated via a complex set of post-translational modifications of histones, also called histone code, and nucleosome remodeling. The protein is Histone H2B.2 (HTB2) of Debaryomyces hansenii (strain ATCC 36239 / CBS 767 / BCRC 21394 / JCM 1990 / NBRC 0083 / IGC 2968) (Yeast).